A 159-amino-acid chain; its full sequence is uncharacterized protein (159 aa).

Helical transmembrane passes span 5 to 27, 34 to 51, 61 to 83, and 103 to 125; these read TLDL…RGFV, ASIL…KRLV, SILL…MLFL, and FGFF…LLHV.

The protein resides in the cell membrane. This is an uncharacterized protein from Treponema pallidum (strain Nichols).